The sequence spans 479 residues: Poly(A) polymerase catalytic subunit (479 aa).

Catalysis depends on residues D202 and D204. Ca(2+) is bound by residues D202, D204, and D253.

It belongs to the poxviridae poly(A) polymerase catalytic subunit family. Heterodimer of a large (catalytic) subunit and a small (regulatory) subunit.

The enzyme catalyses RNA(n) + ATP = RNA(n)-3'-adenine ribonucleotide + diphosphate. Polymerase that creates the 3'-poly(A) tail of mRNA's. In Mus musculus (Mouse), this protein is Poly(A) polymerase catalytic subunit (OPG063).